The chain runs to 164 residues: Kunitz-type trypsin inhibitor BrTI (164 aa).

Belongs to the leguminous Kunitz-type inhibitor family.

Inhibitor of trypsin and human plasma kallikrein with a Ki of 2.9 nM and 14.0 nM, respectively. Does not inhibit chymotrypsin, porcine pancreatic elastas, human neutrophil elastase, coagulation factor Xa, human thrombin, porcine pancreatic kallikrein or plasmin. The chain is Kunitz-type trypsin inhibitor BrTI from Bauhinia rufa (Orchid tree).